The sequence spans 348 residues: Holliday junction branch migration complex subunit RuvB (348 aa).

The interval 1 to 20 (MKPPARMVSPERRSDDVGDT) is disordered. The large ATPase domain (RuvB-L) stretch occupies residues 1–183 (MKPPARMVSP…FGIPIRLNFY (183 aa)). ATP contacts are provided by residues L22, R23, G64, K67, T68, T69, 130–132 (EDF), R173, Y183, and R220. T68 is a Mg(2+) binding site. Positions 184-254 (TVEELEGIVT…IADHALSALE (71 aa)) are small ATPAse domain (RuvB-S). Positions 257–348 (AAGLDAMDRR…QIGLFGNDDD (92 aa)) are head domain (RuvB-H). DNA-binding residues include R293, R312, and R317.

The protein belongs to the RuvB family. As to quaternary structure, homohexamer. Forms an RuvA(8)-RuvB(12)-Holliday junction (HJ) complex. HJ DNA is sandwiched between 2 RuvA tetramers; dsDNA enters through RuvA and exits via RuvB. An RuvB hexamer assembles on each DNA strand where it exits the tetramer. Each RuvB hexamer is contacted by two RuvA subunits (via domain III) on 2 adjacent RuvB subunits; this complex drives branch migration. In the full resolvosome a probable DNA-RuvA(4)-RuvB(12)-RuvC(2) complex forms which resolves the HJ.

It localises to the cytoplasm. It carries out the reaction ATP + H2O = ADP + phosphate + H(+). Its function is as follows. The RuvA-RuvB-RuvC complex processes Holliday junction (HJ) DNA during genetic recombination and DNA repair, while the RuvA-RuvB complex plays an important role in the rescue of blocked DNA replication forks via replication fork reversal (RFR). RuvA specifically binds to HJ cruciform DNA, conferring on it an open structure. The RuvB hexamer acts as an ATP-dependent pump, pulling dsDNA into and through the RuvAB complex. RuvB forms 2 homohexamers on either side of HJ DNA bound by 1 or 2 RuvA tetramers; 4 subunits per hexamer contact DNA at a time. Coordinated motions by a converter formed by DNA-disengaged RuvB subunits stimulates ATP hydrolysis and nucleotide exchange. Immobilization of the converter enables RuvB to convert the ATP-contained energy into a lever motion, pulling 2 nucleotides of DNA out of the RuvA tetramer per ATP hydrolyzed, thus driving DNA branch migration. The RuvB motors rotate together with the DNA substrate, which together with the progressing nucleotide cycle form the mechanistic basis for DNA recombination by continuous HJ branch migration. Branch migration allows RuvC to scan DNA until it finds its consensus sequence, where it cleaves and resolves cruciform DNA. This Bradyrhizobium sp. (strain ORS 278) protein is Holliday junction branch migration complex subunit RuvB.